The primary structure comprises 101 residues: Protein Tat (101 aa).

The interval 1–24 (MDPVDPKLEPWNHPGSQPTTPCNK) is interaction with human CREBBP. The interval 1 to 48 (MDPVDPKLEPWNHPGSQPTTPCNKCYCKVCCWHCQVCFLNKGLGISYG) is transactivation. 3 residues coordinate Zn(2+): Cys-22, Cys-25, and Cys-27. The interval 22-37 (CNKCYCKVCCWHCQVC) is cysteine-rich. N6-acetyllysine; by host PCAF is present on Lys-28. Zn(2+) contacts are provided by Cys-30, His-33, Cys-34, and Cys-37. The tract at residues 38–48 (FLNKGLGISYG) is core. The segment at 48 to 101 (GRKKRRPRRGTPQGSKDHQNPVPKQPLPITSGNPTGSEKPKKEVASKTETDPLD) is disordered. Positions 49–57 (RKKRRPRRG) match the Nuclear localization signal, RNA-binding (TAR), and protein transduction motif. Residues 49 to 86 (RKKRRPRRGTPQGSKDHQNPVPKQPLPITSGNPTGSEK) form an interaction with the host capping enzyme RNGTT region. N6-acetyllysine; by host EP300 and GCN5L2 is present on residues Lys-50 and Lys-51. An asymmetric dimethylarginine; by host PRMT6 mark is found at Arg-52 and Arg-53. Lys-71 is covalently cross-linked (Glycyl lysine isopeptide (Lys-Gly) (interchain with G-Cter in ubiquitin)). The segment covering 85 to 101 (EKPKKEVASKTETDPLD) has biased composition (basic and acidic residues).

The protein belongs to the lentiviruses Tat family. As to quaternary structure, interacts with host CCNT1. Associates with the P-TEFb complex composed at least of Tat, P-TEFb (CDK9 and CCNT1), TAR RNA, RNA Pol II. Recruits the HATs CREBBP, TAF1/TFIID, EP300, PCAF and GCN5L2. Interacts with host KAT5/Tip60; this interaction targets the latter to degradation. Interacts with the host deacetylase SIRT1. Interacts with host capping enzyme RNGTT; this interaction stimulates RNGTT. Binds to host KDR, and to the host integrins ITGAV/ITGB3 and ITGA5/ITGB1. Interacts with host KPNB1/importin beta-1 without previous binding to KPNA1/importin alpha-1. Interacts with EIF2AK2. Interacts with host nucleosome assembly protein NAP1L1; this interaction may be required for the transport of Tat within the nucleus, since the two proteins interact at the nuclear rim. Interacts with host C1QBP/SF2P32; this interaction involves lysine-acetylated Tat. Interacts with the host chemokine receptors CCR2, CCR3 and CXCR4. Interacts with host DPP4/CD26; this interaction may trigger an anti-proliferative effect. Interacts with host LDLR. Interacts with the host extracellular matrix metalloproteinase MMP1. Interacts with host PRMT6; this interaction mediates Tat's methylation. Interacts with, and is ubiquitinated by MDM2/Hdm2. Interacts with host PSMC3 and HTATIP2. Interacts with STAB1; this interaction may overcome SATB1-mediated repression of IL2 and IL2RA (interleukin) in T cells by binding to the same domain than HDAC1. Interacts (when acetylated) with human CDK13, thereby increasing HIV-1 mRNA splicing and promoting the production of the doubly spliced HIV-1 protein Nef. Interacts with host TBP; this interaction modulates the activity of transcriptional pre-initiation complex. Interacts with host RELA. Interacts with host PLSCR1; this interaction negatively regulates Tat transactivation activity by altering its subcellular distribution. Asymmetrical arginine methylation by host PRMT6 seems to diminish the transactivation capacity of Tat and affects the interaction with host CCNT1. In terms of processing, acetylation by EP300, CREBBP, GCN5L2/GCN5 and PCAF regulates the transactivation activity of Tat. EP300-mediated acetylation of Lys-50 promotes dissociation of Tat from the TAR RNA through the competitive binding to PCAF's bromodomain. In addition, the non-acetylated Tat's N-terminus can also interact with PCAF. PCAF-mediated acetylation of Lys-28 enhances Tat's binding to CCNT1. Lys-50 is deacetylated by SIRT1. Post-translationally, polyubiquitination by host MDM2 does not target Tat to degradation, but activates its transactivation function and fosters interaction with CCNT1 and TAR RNA. Phosphorylated by EIF2AK2 on serine and threonine residues adjacent to the basic region important for TAR RNA binding and function. Phosphorylation of Tat by EIF2AK2 is dependent on the prior activation of EIF2AK2 by dsRNA.

The protein resides in the host nucleus. The protein localises to the host nucleolus. It localises to the host cytoplasm. Its subcellular location is the secreted. In terms of biological role, transcriptional activator that increases RNA Pol II processivity, thereby increasing the level of full-length viral transcripts. Recognizes a hairpin structure at the 5'-LTR of the nascent viral mRNAs referred to as the transactivation responsive RNA element (TAR) and recruits the cyclin T1-CDK9 complex (P-TEFb complex) that will in turn hyperphosphorylate the RNA polymerase II to allow efficient elongation. The CDK9 component of P-TEFb and other Tat-activated kinases hyperphosphorylate the C-terminus of RNA Pol II that becomes stabilized and much more processive. Other factors such as HTATSF1/Tat-SF1, SUPT5H/SPT5, and HTATIP2 are also important for Tat's function. Besides its effect on RNA Pol II processivity, Tat induces chromatin remodeling of proviral genes by recruiting the histone acetyltransferases (HATs) CREBBP, EP300 and PCAF to the chromatin. This also contributes to the increase in proviral transcription rate, especially when the provirus integrates in transcriptionally silent region of the host genome. To ensure maximal activation of the LTR, Tat mediates nuclear translocation of NF-kappa-B by interacting with host RELA. Through its interaction with host TBP, Tat may also modulate transcription initiation. Tat can reactivate a latently infected cell by penetrating in it and transactivating its LTR promoter. In the cytoplasm, Tat is thought to act as a translational activator of HIV-1 mRNAs. Its function is as follows. Extracellular circulating Tat can be endocytosed by surrounding uninfected cells via the binding to several surface receptors such as CD26, CXCR4, heparan sulfate proteoglycans (HSPG) or LDLR. Neurons are rarely infected, but they internalize Tat via their LDLR. Through its interaction with nuclear HATs, Tat is potentially able to control the acetylation-dependent cellular gene expression. Modulates the expression of many cellular genes involved in cell survival, proliferation or in coding for cytokines or cytokine receptors. Tat plays a role in T-cell and neurons apoptosis. Tat induced neurotoxicity and apoptosis probably contribute to neuroAIDS. Circulating Tat also acts as a chemokine-like and/or growth factor-like molecule that binds to specific receptors on the surface of the cells, affecting many cellular pathways. In the vascular system, Tat binds to ITGAV/ITGB3 and ITGA5/ITGB1 integrins dimers at the surface of endothelial cells and competes with bFGF for heparin-binding sites, leading to an excess of soluble bFGF. This is Protein Tat from Homo sapiens (Human).